The following is a 266-amino-acid chain: 2-Cys peroxiredoxin BAS1, chloroplastic (266 aa).

Residues M1–S16 show a composition bias toward low complexity. Positions M1–L25 are disordered. The transit peptide at M1–V65 directs the protein to the chloroplast. One can recognise a Thioredoxin domain in the interval P73 to Y232. The active-site Cysteine sulfenic acid (-SOH) intermediate is C119.

This sequence belongs to the peroxiredoxin family. AhpC/Prx1 subfamily. Homodimer; disulfide-linked, upon oxidation. Interacts with the plastidial thioredoxin CDSP32. Interacts with the plastidial NADPH-dependent thioredoxin reductase ANTR-C.

It is found in the plastid. The protein localises to the chloroplast. It carries out the reaction a hydroperoxide + [thioredoxin]-dithiol = an alcohol + [thioredoxin]-disulfide + H2O. Thiol-specific peroxidase that catalyzes the reduction of hydrogen peroxide and organic hydroperoxides to water and alcohols, respectively. Plays a role in cell protection against oxidative stress by detoxifying peroxides. May be an antioxidant enzyme particularly in the developing shoot and photosynthesizing leaf. The protein is 2-Cys peroxiredoxin BAS1, chloroplastic (BAS1) of Arabidopsis thaliana (Mouse-ear cress).